A 483-amino-acid polypeptide reads, in one-letter code: NADH-quinone oxidoreductase subunit N (483 aa).

14 helical membrane passes run 13–33 (ALPE…DAAV), 39–57 (YLAY…FLTV), 76–96 (PLSD…LVYS), 110–130 (FFVL…ASHF), 131–151 (LTLY…VALQ), 165–185 (FVLG…VYGV), 206–226 (IPLV…LGAV), 240–260 (PTAM…AFVV), 277–297 (MLVI…IAQS), 302–322 (MFAY…LAGS), 330–350 (MFYV…ILLL), 373–393 (LAFV…TVGF), 406–426 (IGYV…AFYY), and 459–479 (LAVL…VQAI).

This sequence belongs to the complex I subunit 2 family. In terms of assembly, NDH-1 is composed of 14 different subunits. Subunits NuoA, H, J, K, L, M, N constitute the membrane sector of the complex.

It is found in the cell inner membrane. It catalyses the reaction a quinone + NADH + 5 H(+)(in) = a quinol + NAD(+) + 4 H(+)(out). In terms of biological role, NDH-1 shuttles electrons from NADH, via FMN and iron-sulfur (Fe-S) centers, to quinones in the respiratory chain. The immediate electron acceptor for the enzyme in this species is believed to be ubiquinone. Couples the redox reaction to proton translocation (for every two electrons transferred, four hydrogen ions are translocated across the cytoplasmic membrane), and thus conserves the redox energy in a proton gradient. In Thiobacillus denitrificans (strain ATCC 25259 / T1), this protein is NADH-quinone oxidoreductase subunit N.